The following is a 547-amino-acid chain: Alpha-humulene/(-)-(E)-beta-caryophyllene synthase (547 aa).

(2E,6E)-farnesyl diphosphate contacts are provided by Arg262, Asp299, Asp303, Arg442, and Asp445. Residues Asp299 and Asp303 each contribute to the Mg(2+) site. Positions 299-303 (DDMYD) match the DDXXD motif motif. Residues Asp445, Asp446, Ser449, and Glu453 each coordinate Mg(2+).

The protein belongs to the terpene synthase family. Tpsa subfamily. As to quaternary structure, monomer. It depends on Mg(2+) as a cofactor. Mn(2+) serves as cofactor. In terms of tissue distribution, expressed exclusively in flowers. Expressed in the flower stigmata and also detected in the mesocarp cell layers of the silique wall.

Its subcellular location is the cytoplasm. The catalysed reaction is (2E,6E)-farnesyl diphosphate = (-)-(E)-beta-caryophyllene + diphosphate. It catalyses the reaction (2E,6E)-farnesyl diphosphate = alpha-copaene + diphosphate. The enzyme catalyses (2E,6E)-farnesyl diphosphate = alpha-humulene + diphosphate. It carries out the reaction (2E,6E)-farnesyl diphosphate = (1S,2S,4R)-beta-elemene + diphosphate. It functions in the pathway secondary metabolite biosynthesis; terpenoid biosynthesis. Involved in sesquiterpene (C15) biosynthesis. The major products are beta-caryophyllene and alpha-humulene. Does not convert geranyl diphosphate (GPP) to any monoterpenes. In Arabidopsis thaliana (Mouse-ear cress), this protein is Alpha-humulene/(-)-(E)-beta-caryophyllene synthase.